The following is a 123-amino-acid chain: MASLRIAPLALFFFLAASVMFTVEKTEAGIPCGESCVFIPCITGAIGCSCKSKVCYRDHVIAAEAKTMDDHHLLCQSHEDCITKGTGNFCASFPEQDIKYGWCFRAESEGFMLKDHLKMSVPN.

An N-terminal signal peptide occupies residues 1–28; that stretch reads MASLRIAPLALFFFLAASVMFTVEKTEA. The segment at residues 29–58 is a cross-link (cyclopeptide (Gly-Asp)); it reads GIPCGESCVFIPCITGAIGCSCKSKVCYRD. Disulfide bonds link Cys-32/Cys-48, Cys-36/Cys-50, and Cys-41/Cys-55. Residues 59-123 constitute a propeptide, removed in mature form; it reads HVIAAEAKTM…KDHLKMSVPN (65 aa).

Post-translationally, contains 3 disulfide bonds. This is a cyclic peptide.

In terms of biological role, probably participates in a plant defense mechanism. This chain is Cliotide T12, found in Clitoria ternatea (Butterfly pea).